We begin with the raw amino-acid sequence, 387 residues long: ATP phosphoribosyltransferase regulatory subunit (387 aa).

Belongs to the class-II aminoacyl-tRNA synthetase family. HisZ subfamily. Heteromultimer composed of HisG and HisZ subunits.

It localises to the cytoplasm. Its pathway is amino-acid biosynthesis; L-histidine biosynthesis; L-histidine from 5-phospho-alpha-D-ribose 1-diphosphate: step 1/9. Required for the first step of histidine biosynthesis. May allow the feedback regulation of ATP phosphoribosyltransferase activity by histidine. The chain is ATP phosphoribosyltransferase regulatory subunit from Psychrobacter arcticus (strain DSM 17307 / VKM B-2377 / 273-4).